A 531-amino-acid polypeptide reads, in one-letter code: Acetate CoA-transferase YdiF (531 aa).

E333 (5-glutamyl coenzyme A thioester intermediate) is an active-site residue.

It belongs to the 3-oxoacid CoA-transferase family. As to quaternary structure, homotetramer; dimer of dimers.

The catalysed reaction is an acyl-CoA + acetate = a carboxylate + acetyl-CoA. Its function is as follows. CoA transferase having broad substrate specificity for short-chain acyl-CoA thioesters with the activity decreasing when the length of the carboxylic acid chain exceeds four carbons. Exhibits high activity with acetoacetyl-CoA, propionyl-CoA, crotonoyl-CoA or butyryl-CoA as donors, with acetate as an acceptor. When acetyl-CoA is used as the donor, propionate, acetoacetate, butyrate, isobutyrate, and 4-hydroxybutyrate can be utilized as acceptors but not isovalerate. May play a role in short-chain fatty acid metabolism in E.coli. The chain is Acetate CoA-transferase YdiF from Escherichia coli O157:H7.